The primary structure comprises 198 residues: MAEVRARVDFKVGAKSNIDAEILSFRGLKTDKEHVAVIFKQADQTQDTPLVRMHSECLTGDVFHSSRCDCGEQLEETIQRMGESGGVILYLRQEGRGIGLYNKIDAYRLQSQGMNTYEANNHLGFDDDLRDFTEAAQMLEALGIKKIRLVTNNPKKIRELAEYGIEIVEVVNTSAHIKDGNENYLRAKVSHGKHNLKV.

52-56 (RMHSE) contacts GTP. Residues cysteine 57, cysteine 68, and cysteine 70 each coordinate Zn(2+). Residues glutamine 73, 94-96 (EGR), and threonine 116 contribute to the GTP site. Catalysis depends on aspartate 128, which acts as the Proton acceptor. Arginine 130 acts as the Nucleophile in catalysis. Threonine 151 and lysine 156 together coordinate GTP.

It belongs to the GTP cyclohydrolase II family. The cofactor is Zn(2+).

The enzyme catalyses GTP + 4 H2O = 2,5-diamino-6-hydroxy-4-(5-phosphoribosylamino)-pyrimidine + formate + 2 phosphate + 3 H(+). The protein operates within cofactor biosynthesis; riboflavin biosynthesis; 5-amino-6-(D-ribitylamino)uracil from GTP: step 1/4. Functionally, catalyzes the conversion of GTP to 2,5-diamino-6-ribosylamino-4(3H)-pyrimidinone 5'-phosphate (DARP), formate and pyrophosphate. This chain is GTP cyclohydrolase-2, found in Vibrio parahaemolyticus serotype O3:K6 (strain RIMD 2210633).